A 707-amino-acid polypeptide reads, in one-letter code: Ribosomal RNA large subunit methyltransferase K/L (707 aa).

The 112-residue stretch at Gln-43–Met-154 folds into the THUMP domain.

Belongs to the methyltransferase superfamily. RlmKL family.

It localises to the cytoplasm. The catalysed reaction is guanosine(2445) in 23S rRNA + S-adenosyl-L-methionine = N(2)-methylguanosine(2445) in 23S rRNA + S-adenosyl-L-homocysteine + H(+). It catalyses the reaction guanosine(2069) in 23S rRNA + S-adenosyl-L-methionine = N(2)-methylguanosine(2069) in 23S rRNA + S-adenosyl-L-homocysteine + H(+). In terms of biological role, specifically methylates the guanine in position 2445 (m2G2445) and the guanine in position 2069 (m7G2069) of 23S rRNA. The sequence is that of Ribosomal RNA large subunit methyltransferase K/L from Vibrio campbellii (strain ATCC BAA-1116).